The chain runs to 60 residues: Mating pheromone En-2 (60 aa).

Disulfide bonds link C11-C39, C24-C35, C31-C57, and C36-C48.

It localises to the secreted. Mating ciliate pheromones (or gamones) are diffusible extracellular communication signals that distinguish different intraspecific classes of cells commonly referred to as 'mating types'. They prepare the latter for conjugation by changing their cell surface properties. This chain is Mating pheromone En-2, found in Euplotes nobilii (Ciliate).